Here is a 258-residue protein sequence, read N- to C-terminus: Thiazole synthase (258 aa).

Lys-100 serves as the catalytic Schiff-base intermediate with DXP. 1-deoxy-D-xylulose 5-phosphate-binding positions include Gly-161, 187–188 (AG), and 209–210 (NS).

The protein belongs to the ThiG family. In terms of assembly, homotetramer. Forms heterodimers with either ThiH or ThiS.

The protein localises to the plastid. It is found in the chloroplast. It carries out the reaction [ThiS sulfur-carrier protein]-C-terminal-Gly-aminoethanethioate + 2-iminoacetate + 1-deoxy-D-xylulose 5-phosphate = [ThiS sulfur-carrier protein]-C-terminal Gly-Gly + 2-[(2R,5Z)-2-carboxy-4-methylthiazol-5(2H)-ylidene]ethyl phosphate + 2 H2O + H(+). It participates in cofactor biosynthesis; thiamine diphosphate biosynthesis. Its function is as follows. Catalyzes the rearrangement of 1-deoxy-D-xylulose 5-phosphate (DXP) to produce the thiazole phosphate moiety of thiamine. Sulfur is provided by the thiocarboxylate moiety of the carrier protein ThiS. In vitro, sulfur can be provided by H(2)S. The polypeptide is Thiazole synthase (Cyanidioschyzon merolae (strain NIES-3377 / 10D) (Unicellular red alga)).